We begin with the raw amino-acid sequence, 1072 residues long: Translation initiation factor IF-2 (1072 aa).

Disordered stretches follow at residues 55 to 369 (ILDK…TGTA) and 426 to 452 (ELVD…VSKQ). Low complexity-rich tracts occupy residues 91 to 100 (AEASQAAEPA), 108 to 118 (EPATFAAEEPV), 126 to 179 (APRA…AEVA), and 186 to 212 (EAPQ…PSVQ). Residues 218–230 (PQPPPRSPVPPAV) are compositionally biased toward pro residues. The span at 231-245 (RTPSSTSSSATVVSR) shows a compositional bias: low complexity. Gly residues predominate over residues 253 to 307 (QRGGPGGGRPGGPGGPGGRPGGPGGPGGRPGGPGGPGGRPGGPGGPGGRPGGPGG). Residues 426–436 (ELVDVSKNKER) show a composition bias toward basic and acidic residues. Residues 570–737 (PRPPVVAIMG…NLALQAEVLE (168 aa)) form the tr-type G domain. The interval 579–586 (GHVDHGKT) is G1. 579-586 (GHVDHGKT) is a GTP binding site. The segment at 604–608 (GITQH) is G2. Residues 625 to 628 (DTPG) are G3. GTP is bound by residues 625–629 (DTPGH) and 679–682 (NKMD). Positions 679-682 (NKMD) are G4. Residues 715–717 (SAK) are G5.

This sequence belongs to the TRAFAC class translation factor GTPase superfamily. Classic translation factor GTPase family. IF-2 subfamily.

It is found in the cytoplasm. In terms of biological role, one of the essential components for the initiation of protein synthesis. Protects formylmethionyl-tRNA from spontaneous hydrolysis and promotes its binding to the 30S ribosomal subunits. Also involved in the hydrolysis of GTP during the formation of the 70S ribosomal complex. The sequence is that of Translation initiation factor IF-2 from Myxococcus xanthus (strain DK1622).